A 447-amino-acid chain; its full sequence is Gastrin/cholecystokinin type B receptor (447 aa).

The Extracellular segment spans residues 1–57 (MELLKLNRSVQGTGPGPGASLCRPGAPLLNSSSVGNLSCEPPRIRGAGTRELELAIR). Residues N7, N30, and N36 are each glycosylated (N-linked (GlcNAc...) asparagine). A helical transmembrane segment spans residues 58–79 (ITLYAVIFLMSVGGNMLIIVVL). Residues 80–87 (GLSRRLRT) are Cytoplasmic-facing. Residues 88-109 (VTNAFLLSLAVSDLLLAVACMP) form a helical membrane-spanning segment. Over 110-131 (FTLLPNLMGTFIFGTVICKAVS) the chain is Extracellular. An intrachain disulfide couples C127 to C205. The chain crosses the membrane as a helical span at residues 132–150 (YLMGVSVSVSTLSLVAIAL). At 151-170 (ERYSAICRPLQARVWQTRSH) the chain is on the cytoplasmic side. Residues 171–189 (AARVIVATWLLSGLLMVPY) form a helical membrane-spanning segment. The Extracellular segment spans residues 190 to 219 (PVYTVVQPVGPRVLQCVHRWPSARVRQTWS). Residues 220 to 242 (VLLLLLLFFIPGVVMAVAYGLIS) form a helical membrane-spanning segment. Residues 243-333 (RELYLGLRFD…KLLAKKRVVR (91 aa)) lie on the Cytoplasmic side of the membrane. Residues 258–285 (DSQSRVRNQGGLPGAVHQNGRCRPETGA) form a disordered region. Residues 334-355 (MLLVIVVLFFLCWLPVYSANTW) form a helical membrane-spanning segment. Topologically, residues 356–373 (RAFDGPGAHRALSGAPIS) are extracellular. The helical transmembrane segment at 374–394 (FIHLLSYASACVNPLVYCFMH) threads the bilayer. Over 395–447 (RRFRQACLETCARCCPRPPRARPRALPDEDPPTPSIASLSRLSYTTISTLGPG) the chain is Cytoplasmic. C408 is lipidated: S-palmitoyl cysteine.

This sequence belongs to the G-protein coupled receptor 1 family. As to expression, isoform 1 is expressed in brain, pancreas, stomach, the colon cancer cell line LoVo and the T-lymphoblastoma Jurkat, but not in heart, placenta, liver, lung, skeletal muscle, kidney or the stomach cancer cell line AGS. Expressed at high levels in the small cell lung cancer cell line NCI-H510, at lower levels in NCI-H345, NCI-H69 and GLC-28 cell lines, not expressed in GLC-19 cell line. Within the stomach, expressed at high levels in the mucosa of the gastric fundus and at low levels in the antrum and duodenum. Isoform 2 is present in pancreatic cancer cells and colorectal cancer cells, but not in normal pancreas or colonic mucosa. Isoform 3 is expressed in brain, pancreas, stomach, the stomach cancer cell line AGS and the colon cancer cell line LoVo.

Its subcellular location is the cell membrane. In terms of biological role, receptor for gastrin and cholecystokinin. The CCK-B receptors occur throughout the central nervous system where they modulate anxiety, analgesia, arousal, and neuroleptic activity. This receptor mediates its action by association with G proteins that activate a phosphatidylinositol-calcium second messenger system. Its function is as follows. Isoform 2 is constitutively activated and may regulate cancer cell proliferation via a gastrin-independent mechanism. The protein is Gastrin/cholecystokinin type B receptor of Homo sapiens (Human).